A 303-amino-acid polypeptide reads, in one-letter code: N-acetyl-D-glucosamine kinase (303 aa).

Residues 4-11 and 133-140 contribute to the ATP site; these read GFDIGGTK and GVGGGLIF. Residues H157, C177, C179, and C184 each coordinate Zn(2+).

The protein belongs to the ROK (NagC/XylR) family. NagK subfamily.

It carries out the reaction N-acetyl-D-glucosamine + ATP = N-acetyl-D-glucosamine 6-phosphate + ADP + H(+). It participates in cell wall biogenesis; peptidoglycan recycling. Its function is as follows. Catalyzes the phosphorylation of N-acetyl-D-glucosamine (GlcNAc) derived from cell-wall degradation, yielding GlcNAc-6-P. This is N-acetyl-D-glucosamine kinase from Escherichia coli (strain K12 / DH10B).